Reading from the N-terminus, the 75-residue chain is Vacuolar ATPase assembly integral membrane protein VMA21 (75 aa).

The Cytoplasmic portion of the chain corresponds to 1 to 8 (MPVDVAPG). Residues 9–29 (VIKKLMFFTAAMVICPLLTFF) form a helical membrane-spanning segment. Residues 30 to 41 (SIKQFTTNTIVS) are Lumenal-facing. The helical transmembrane segment at 42–62 (GGLAALAANLVLIGYIVVAFM) threads the bilayer. Residues 63-75 (EDTTDVKAESKKD) are Cytoplasmic-facing.

Belongs to the VMA21 family.

The protein localises to the endoplasmic reticulum membrane. It localises to the endoplasmic reticulum-Golgi intermediate compartment membrane. The protein resides in the cytoplasmic vesicle. It is found in the COPII-coated vesicle membrane. In terms of biological role, required for the assembly of the V0 complex of the vacuolar ATPase (V-ATPase) in the endoplasmic reticulum. This is Vacuolar ATPase assembly integral membrane protein VMA21 from Vanderwaltozyma polyspora (strain ATCC 22028 / DSM 70294 / BCRC 21397 / CBS 2163 / NBRC 10782 / NRRL Y-8283 / UCD 57-17) (Kluyveromyces polysporus).